Here is a 235-residue protein sequence, read N- to C-terminus: Orotidine 5'-phosphate decarboxylase (235 aa).

Residues Asp9, Lys31, Asp58 to Thr67, Thr121, Arg180, Gln190, Gly210, and Arg211 contribute to the substrate site. The Proton donor role is filled by Lys60.

The protein belongs to the OMP decarboxylase family. Type 1 subfamily. As to quaternary structure, homodimer.

The enzyme catalyses orotidine 5'-phosphate + H(+) = UMP + CO2. The protein operates within pyrimidine metabolism; UMP biosynthesis via de novo pathway; UMP from orotate: step 2/2. Functionally, catalyzes the decarboxylation of orotidine 5'-monophosphate (OMP) to uridine 5'-monophosphate (UMP). This is Orotidine 5'-phosphate decarboxylase from Nitratidesulfovibrio vulgaris (strain ATCC 29579 / DSM 644 / CCUG 34227 / NCIMB 8303 / VKM B-1760 / Hildenborough) (Desulfovibrio vulgaris).